We begin with the raw amino-acid sequence, 613 residues long: Glutaminase 1 (613 aa).

The glutaminase stretch occupies residues Gly-33–Leu-315. Ser-75, Asn-124, Glu-168, Asn-175, Tyr-199, Tyr-251, and Val-269 together coordinate substrate. The STAS domain maps to Arg-345–Asp-457. An a nucleoside 3',5'-cyclic phosphate-binding site is contributed by Leu-480–Leu-595.

The protein belongs to the glutaminase family. Homotetramer.

The catalysed reaction is L-glutamine + H2O = L-glutamate + NH4(+). This chain is Glutaminase 1 (glsA1), found in Bradyrhizobium diazoefficiens (strain JCM 10833 / BCRC 13528 / IAM 13628 / NBRC 14792 / USDA 110).